Reading from the N-terminus, the 134-residue chain is Small ribosomal subunit protein bS16 (134 aa).

Residues 80–134 (GLAKRPTRSNPTKGEPGKKAQERLAMAKQAEEEAAAKAAEAAAAAAAPAEEAASE) form a disordered region. Residues 115-134 (AKAAEAAAAAAAPAEEAASE) show a composition bias toward low complexity.

The protein belongs to the bacterial ribosomal protein bS16 family.

The protein is Small ribosomal subunit protein bS16 of Brucella anthropi (strain ATCC 49188 / DSM 6882 / CCUG 24695 / JCM 21032 / LMG 3331 / NBRC 15819 / NCTC 12168 / Alc 37) (Ochrobactrum anthropi).